Consider the following 341-residue polypeptide: Methionine import ATP-binding protein MetN 2 (341 aa).

Residues 2 to 241 enclose the ABC transporter domain; the sequence is INLQNVSKIY…PKEEMTKRFV (240 aa). Position 38–45 (38–45) interacts with ATP; that stretch reads GYSGAGKS.

Belongs to the ABC transporter superfamily. Methionine importer (TC 3.A.1.24) family. The complex is composed of two ATP-binding proteins (MetN), two transmembrane proteins (MetI) and a solute-binding protein (MetQ).

The protein resides in the cell membrane. It catalyses the reaction L-methionine(out) + ATP + H2O = L-methionine(in) + ADP + phosphate + H(+). The enzyme catalyses D-methionine(out) + ATP + H2O = D-methionine(in) + ADP + phosphate + H(+). Its function is as follows. Part of the ABC transporter complex MetNIQ involved in methionine import. Responsible for energy coupling to the transport system. This is Methionine import ATP-binding protein MetN 2 from Bacillus licheniformis (strain ATCC 14580 / DSM 13 / JCM 2505 / CCUG 7422 / NBRC 12200 / NCIMB 9375 / NCTC 10341 / NRRL NRS-1264 / Gibson 46).